We begin with the raw amino-acid sequence, 79 residues long: NADH-ubiquinone oxidoreductase chain 5 (79 aa).

2 helical membrane-spanning segments follow: residues 5 to 27 (TPIM…TNPY) and 40 to 57 (VMYA…FILS).

This sequence belongs to the complex I subunit 5 family. In terms of assembly, core subunit of respiratory chain NADH dehydrogenase (Complex I) which is composed of 45 different subunits.

It localises to the mitochondrion inner membrane. The catalysed reaction is a ubiquinone + NADH + 5 H(+)(in) = a ubiquinol + NAD(+) + 4 H(+)(out). In terms of biological role, core subunit of the mitochondrial membrane respiratory chain NADH dehydrogenase (Complex I) which catalyzes electron transfer from NADH through the respiratory chain, using ubiquinone as an electron acceptor. Essential for the catalytic activity and assembly of complex I. This Macaca fascicularis (Crab-eating macaque) protein is NADH-ubiquinone oxidoreductase chain 5 (MT-ND5).